The following is a 77-amino-acid chain: MNPIVEFCVNNLASGADAAFAKLDADDNLDVIEYDCLTYCDLCATSLFALVDGEVVRGETAEELVANIYTFLEENPF.

The protein belongs to the UPF0349 family.

The protein is UPF0349 protein lmo2392 of Listeria monocytogenes serovar 1/2a (strain ATCC BAA-679 / EGD-e).